Reading from the N-terminus, the 161-residue chain is Peripheral myelin protein 22 (161 aa).

Residue Met1 is a topological domain, cytoplasmic. The helical transmembrane segment at 2–31 threads the bilayer; it reads LLLLLGILFLHIAVLVLLFVSTIVSQWLVG. Residues 32-64 are Extracellular-facing; sequence NGHTTDLWQNCTTSALGAVQHCYSSSVSEWLQS. Asn41 is a glycosylation site (N-linked (GlcNAc...) asparagine). A helical transmembrane segment spans residues 65–91; that stretch reads VQATMILSVIFSVLALFLFFCQLFTLT. Residues 92–95 are Cytoplasmic-facing; it reads KGGR. The chain crosses the membrane as a helical span at residues 96 to 119; it reads FYITGFFQILAGLCVMSAAAIYTV. The Extracellular portion of the chain corresponds to 120-133; sequence RHSEWHVNTDYSYG. A helical membrane pass occupies residues 134–156; that stretch reads FAYILAWVAFPLALLSGIIYVIL. Topologically, residues 157 to 160 are cytoplasmic; it reads RKRE.

Belongs to the PMP-22/EMP/MP20 family. Ubiquitinated by the DCX(DCAF13) E3 ubiquitin ligase complex, leading to its degradation. Schwann cells of the peripheral nervous system. Expressed at growth arrest of mammalian fibroblasts.

The protein localises to the cell membrane. Its function is as follows. Might be involved in growth regulation, and in myelinization in the peripheral nervous system. The chain is Peripheral myelin protein 22 (Pmp22) from Mus musculus (Mouse).